The primary structure comprises 132 residues: Ribosome-binding factor A (132 aa).

Belongs to the RbfA family. In terms of assembly, monomer. Binds 30S ribosomal subunits, but not 50S ribosomal subunits or 70S ribosomes.

It is found in the cytoplasm. One of several proteins that assist in the late maturation steps of the functional core of the 30S ribosomal subunit. Associates with free 30S ribosomal subunits (but not with 30S subunits that are part of 70S ribosomes or polysomes). Required for efficient processing of 16S rRNA. May interact with the 5'-terminal helix region of 16S rRNA. This Xanthomonas campestris pv. campestris (strain 8004) protein is Ribosome-binding factor A.